Consider the following 227-residue polypeptide: UPF0758 protein Rxyl_1530 (227 aa).

The MPN domain occupies 106-227; the sequence is VISSPADVDG…YFSMKEHGML (122 aa). Residues His177, His179, and Asp190 each contribute to the Zn(2+) site. Positions 177 to 190 match the JAMM motif motif; sequence HNHPSGRVEPSRED.

It belongs to the UPF0758 family.

This Rubrobacter xylanophilus (strain DSM 9941 / JCM 11954 / NBRC 16129 / PRD-1) protein is UPF0758 protein Rxyl_1530.